The primary structure comprises 513 residues: 2,3-bisphosphoglycerate-independent phosphoglycerate mutase (513 aa).

The Mn(2+) site is built by Asp13 and Ser63. The active-site Phosphoserine intermediate is the Ser63. Substrate-binding positions include His124, 154–155, Arg186, Arg192, 262–265, and Lys335; these read RD and RADR. Mn(2+) is bound by residues Asp403, His407, Asp444, His445, and His463.

It belongs to the BPG-independent phosphoglycerate mutase family. As to quaternary structure, monomer. The cofactor is Mn(2+).

It carries out the reaction (2R)-2-phosphoglycerate = (2R)-3-phosphoglycerate. The protein operates within carbohydrate degradation; glycolysis; pyruvate from D-glyceraldehyde 3-phosphate: step 3/5. Functionally, catalyzes the interconversion of 2-phosphoglycerate and 3-phosphoglycerate. The chain is 2,3-bisphosphoglycerate-independent phosphoglycerate mutase from Myxococcus xanthus (strain DK1622).